Consider the following 293-residue polypeptide: uncharacterized protein (293 aa).

This is an uncharacterized protein from Mycobacterium tuberculosis (strain CDC 1551 / Oshkosh).